Reading from the N-terminus, the 93-residue chain is Small ribosomal subunit protein uS19 (93 aa).

The protein belongs to the universal ribosomal protein uS19 family.

Its function is as follows. Protein S19 forms a complex with S13 that binds strongly to the 16S ribosomal RNA. This Helicobacter pylori (strain G27) protein is Small ribosomal subunit protein uS19.